The sequence spans 390 residues: Protein snail (390 aa).

The tract at residues 1 to 20 (MAANYKSCPLKKRPIVFVEE) is SNAG domain. Disordered regions lie at residues 29–65 (ALTKDSQFAQDQPQDLSLKRGRDEETQDYQQPEPKRD) and 162–191 (QSVYSYQQMTPPSSPGSDLETGSEPEDLSV). Polar residues-rich tracts occupy residues 32–43 (KDSQFAQDQPQD) and 162–172 (QSVYSYQQMTP). 5 consecutive C2H2-type zinc fingers follow at residues 245-267 (FKCDECQKMYSTSMGLSKHRQFH), 280-302 (HSCEECGKLYTTIGALKMHIRTH), 306-328 (CKCPICGKAFSRPWLLQGHIRTH), 334-356 (FQCPDCPRSFADRSNLRAHQQTH), and 362-385 (YACQVCHKSFSRMSLLNKHSSSNC).

The protein belongs to the snail C2H2-type zinc-finger protein family.

It localises to the nucleus. Essential for the correct specification of ventral-dorsal patterns. This is Protein snail (sna) from Drosophila melanogaster (Fruit fly).